A 71-amino-acid polypeptide reads, in one-letter code: Conotoxin AbVIG (71 aa).

A signal peptide spans 1–17; it reads VLIIAVLFLTACQLTTA. The propeptide occupies 18–40; it reads ETSSRGKQKHRALRSTDKNSRMT. 3 disulfides stabilise this stretch: Cys43-Cys57, Cys50-Cys61, and Cys56-Cys68.

Belongs to the conotoxin O1 superfamily. Expressed by the venom duct.

It localises to the secreted. This chain is Conotoxin AbVIG, found in Conus abbreviatus (Abbreviated cone).